Consider the following 230-residue polypeptide: Small ribosomal subunit protein uS2 (230 aa).

The protein belongs to the universal ribosomal protein uS2 family.

In Prochlorococcus marinus (strain NATL2A), this protein is Small ribosomal subunit protein uS2.